An 814-amino-acid chain; its full sequence is Echinoderm microtubule-associated protein-like 1 (814 aa).

The stretch at 31-72 (SMEISDRIASLEQRVQMQEDDIQLLKSALADVVRRLNITEEQ) forms a coiled coil. Residues 77–185 (NRKGPTKARP…EPTFSPEEGY (109 aa)) are disordered. Positions 92–101 (PLRTTVNNGT) are enriched in polar residues. Low complexity predominate over residues 103–115 (LPKKPSASLPSPS). Ser113 carries the post-translational modification Phosphoserine. Residues 127 to 137 (KSINRTSSSER) show a composition bias toward polar residues. Positions 142 to 152 (GRRESSGDSKG) are enriched in basic and acidic residues. Residues 155–167 (NRTGSTSSSSSGK) show a composition bias toward low complexity. The tandem atypical propeller in EMLs stretch occupies residues 175–814 (KEPTFSPEEG…DTSIMQWRVI (640 aa)). WD repeat units lie at residues 260 to 309 (EQLQ…IWDS), 314 to 357 (TLHV…VWDW), 362 to 399 (RLAD…FWTL), 408 to 445 (QGLF…VWGK), 449 to 488 (RISY…SWNG), 492 to 529 (KLHK…LQGT), 534 to 571 (FTPI…LWDA), 577 to 612 (VWDK…VFDT), 616 to 654 (DLVT…IYGV), 663 to 700 (RVGK…YWVP), 708 to 767 (SVET…LFSY), and 774 to 813 (APSH…QWRV).

This sequence belongs to the WD repeat EMAP family. Homotrimer; self-association is mediated by the N-terminal coiled coil. Does not interact with EML3. Binds repolymerizing microtubules. Binds unpolymerized tubulins via its WD repeat region. Interacts with TASOR.

The protein localises to the cytoplasm. The protein resides in the perinuclear region. It localises to the cytoskeleton. In terms of biological role, modulates the assembly and organization of the microtubule cytoskeleton, and probably plays a role in regulating the orientation of the mitotic spindle and the orientation of the plane of cell division. Required for normal proliferation of neuronal progenitor cells in the developing brain and for normal brain development. Does not affect neuron migration per se. The chain is Echinoderm microtubule-associated protein-like 1 (Eml1) from Rattus norvegicus (Rat).